We begin with the raw amino-acid sequence, 126 residues long: Cytochrome c2 (126 aa).

Positions 17, 20, 21, and 101 each coordinate heme c.

The protein belongs to the cytochrome c family. In terms of processing, binds 1 heme c group covalently per subunit.

Its subcellular location is the periplasm. Its function is as follows. Cytochrome c2 is found mainly in purple, non-sulfur, photosynthetic bacteria where it functions as the electron donor to the oxidized bacteriochlorophyll in the photophosphorylation pathway. However, it may also have a role in the respiratory chain and is found in some non-photosynthetic bacteria. In Rhodovulum adriaticum (Rhodopseudomonas adriatica), this protein is Cytochrome c2.